A 379-amino-acid chain; its full sequence is Cobalt-precorrin-5B C(1)-methyltransferase (379 aa).

It belongs to the CbiD family.

The enzyme catalyses Co-precorrin-5B + S-adenosyl-L-methionine = Co-precorrin-6A + S-adenosyl-L-homocysteine. It participates in cofactor biosynthesis; adenosylcobalamin biosynthesis; cob(II)yrinate a,c-diamide from sirohydrochlorin (anaerobic route): step 6/10. Functionally, catalyzes the methylation of C-1 in cobalt-precorrin-5B to form cobalt-precorrin-6A. This chain is Cobalt-precorrin-5B C(1)-methyltransferase, found in Salmonella heidelberg (strain SL476).